A 614-amino-acid polypeptide reads, in one-letter code: V-type proton ATPase catalytic subunit A (614 aa).

Position 247-254 (247-254) interacts with ATP; it reads GAFGCGKT.

This sequence belongs to the ATPase alpha/beta chains family. V-ATPase is a heteromultimeric enzyme made up of two complexes: the ATP-hydrolytic V1 complex and the proton translocation V0 complex. The V1 complex consists of three catalytic AB heterodimers that form a heterohexamer, three peripheral stalks each consisting of EG heterodimers, one central rotor including subunits D and F, and the regulatory subunits C and H. The proton translocation complex V0 consists of the proton transport subunit a, a ring of proteolipid subunits c9c'', rotary subunit d, subunits e and f, and the accessory subunits VhaAC45 and ATP6AP2.

It carries out the reaction ATP + H2O + 4 H(+)(in) = ADP + phosphate + 5 H(+)(out). Its activity is regulated as follows. ATP hydrolysis occurs at the interface between the nucleotide-binding domains of subunits A and B. ATP hydrolysis triggers a conformational change in the subunits D and F, which induces a shift of subunit d. The c-ring is subsequently rotated and results in a continuous proton translocation across the membrane. Its function is as follows. Catalytic subunit of the V1 complex of vacuolar(H+)-ATPase (V-ATPase), a multisubunit enzyme composed of a peripheral complex (V1) that hydrolyzes ATP and a membrane integral complex (V0) that translocates protons. V-ATPase is responsible for acidifying and maintaining the pH of intracellular compartments and in some cell types, is targeted to the plasma membrane, where it is responsible for acidifying the extracellular environment. This is V-type proton ATPase catalytic subunit A from Anopheles gambiae (African malaria mosquito).